A 984-amino-acid polypeptide reads, in one-letter code: Ephrin type-B receptor 1 (984 aa).

The N-terminal stretch at 1–17 is a signal peptide; that stretch reads MALDCLLLFLLASAVAA. The Extracellular portion of the chain corresponds to 18-540; the sequence is MEETLMDTRT…YKSELREQLP (523 aa). The Eph LBD domain maps to 19–201; sequence EETLMDTRTA…FFKKCPSIVQ (183 aa). Fibronectin type-III domains are found at residues 322 to 432 and 433 to 528; these read VPSG…TNQA and APST…TLTD. N-linked (GlcNAc...) asparagine glycans are attached at residues Asn-334, Asn-426, and Asn-480. A helical membrane pass occupies residues 541 to 563; that stretch reads LIAGSAAAGVVFVVSLVAISIVC. Residues 564-984 are Cytoplasmic-facing; sequence SRKRAYSKEA…QMNQSPSVMA (421 aa). The residue at position 600 (Tyr-600) is a Phosphotyrosine. The 264-residue stretch at 619–882 folds into the Protein kinase domain; sequence VKIEEVIGAG…EIVNTLDKMI (264 aa). ATP contacts are provided by residues 625–633 and Lys-651; that span reads IGAGEFGEV. Asp-744 serves as the catalytic Proton acceptor. The SAM domain occupies 911–975; the sequence is TAFTTVDDWL…LSSIHSMRVQ (65 aa). Tyr-928 carries the post-translational modification Phosphotyrosine; by autocatalysis. Residues 982–984 carry the PDZ-binding motif; sequence VMA.

It belongs to the protein kinase superfamily. Tyr protein kinase family. Ephrin receptor subfamily. Heterotetramer upon binding of the ligand. The heterotetramer is composed of an ephrin dimer and a receptor dimer. Oligomerization is probably required to induce biological responses. Interacts with EPHB6; transphosphorylates EPHB6 to form an active signaling complex. Interacts with PICK1. Interacts (through Tyr-594) with NCK1 (via SH2 domain); activates the JUN cascade to regulate cell adhesion. The ligand-activated form interacts (through Tyr-928) with GRB7 and GRB10 (via SH2 domains). The ligand-activated form interacts (residues within the catalytic domain) with GRB2 (via SH2 domain). Interacts with GRB2, SHC1 and SRC; activates the MAPK/ERK cascade to regulate cell migration. Interacts with CBL; regulates receptor degradation through ubiquitination. Interacts with ACP1. In terms of processing, phosphorylated. Autophosphorylation is stimulated by the ligand EFNB1. Required for interaction with SH2 domain-containing interactors, for activation of the MAPK/ERK and JUN signaling cascades and for ubiquitination by CBL. Post-translationally, ubiquitinated; (EFNB1)ligand-induced poly- and/or multi-ubiquitination by CBL is regulated by SRC and leads to lysosomal degradation. In terms of tissue distribution, expressed in neural stem and progenitor cells in the dentate gyrus. Expressed in myogenic progenitor cells.

The protein localises to the cell membrane. It is found in the early endosome membrane. Its subcellular location is the cell projection. The protein resides in the dendrite. The catalysed reaction is L-tyrosyl-[protein] + ATP = O-phospho-L-tyrosyl-[protein] + ADP + H(+). Functionally, receptor tyrosine kinase which binds promiscuously transmembrane ephrin-B family ligands residing on adjacent cells, leading to contact-dependent bidirectional signaling into neighboring cells. The signaling pathway downstream of the receptor is referred to as forward signaling while the signaling pathway downstream of the ephrin ligand is referred to as reverse signaling. Cognate/functional ephrin ligands for this receptor include EFNB1, EFNB2 and EFNB3. During nervous system development, regulates retinal axon guidance redirecting ipsilaterally ventrotemporal retinal ganglion cells axons at the optic chiasm midline. This probably requires repulsive interaction with EFNB2. In the adult nervous system together with EFNB3, regulates chemotaxis, proliferation and polarity of the hippocampus neural progenitors. In addition to its role in axon guidance also plays an important redundant role with other ephrin-B receptors in development and maturation of dendritic spines and synapse formation. May also regulate angiogenesis. More generally, may play a role in targeted cell migration and adhesion. Upon activation by EFNB1 and probably other ephrin-B ligands activates the MAPK/ERK and the JNK signaling cascades to regulate cell migration and adhesion respectively. Involved in the maintenance of the pool of satellite cells (muscle stem cells) by promoting their self-renewal and reducing their activation and differentiation. The sequence is that of Ephrin type-B receptor 1 (Ephb1) from Mus musculus (Mouse).